The sequence spans 827 residues: Beta-galactosidase 2 (827 aa).

An N-terminal signal peptide occupies residues 1 to 24 (MAASAVAVAFVVAVAAVLAAAASA). The active-site Proton donor is the glutamate 182. N-linked (GlcNAc...) asparagine glycosylation occurs at asparagine 209. Glutamate 251 serves as the catalytic Nucleophile. A glycan (N-linked (GlcNAc...) asparagine) is linked at asparagine 458. The region spanning 741 to 827 (DYEKAKVHLQ…KRAVVEAICG (87 aa)) is the SUEL-type lectin domain.

This sequence belongs to the glycosyl hydrolase 35 family.

It localises to the secreted. The protein localises to the extracellular space. It is found in the apoplast. It catalyses the reaction Hydrolysis of terminal non-reducing beta-D-galactose residues in beta-D-galactosides.. This chain is Beta-galactosidase 2, found in Oryza sativa subsp. japonica (Rice).